A 384-amino-acid chain; its full sequence is Putative exopolyphosphatase (384 aa).

Residues D40, D42, D116, H138, and D200 each contribute to the Mn(2+) site.

This sequence belongs to the PPase class C family. Requires Mn(2+) as cofactor.

It catalyses the reaction [phosphate](n) + H2O = [phosphate](n-1) + phosphate + H(+). Degradation of inorganic polyphosphates. In Schizosaccharomyces pombe (strain 972 / ATCC 24843) (Fission yeast), this protein is Putative exopolyphosphatase.